The primary structure comprises 317 residues: Melanocyte-stimulating hormone receptor (317 aa).

The Extracellular portion of the chain corresponds to 1–37 (MPVLGSQRRLLGSLNCTPPATFPLTLAPNRTGPQCLE). The N-linked (GlcNAc...) asparagine glycan is linked to Asn-29. Residues 38-63 (VSIPDGLFLSLGLVSLVENVLVVAAI) traverse the membrane as a helical segment. The Cytoplasmic portion of the chain corresponds to 64–72 (AKNRNLHSP). The helical transmembrane segment at 73-93 (MYYFICCLAVSDLLVSVSNVL) threads the bilayer. Residues 94-118 (ETAVMLLLEAGALAARAAVVQQLDN) lie on the Extracellular side of the membrane. A helical membrane pass occupies residues 119-140 (VIDMLICGSMVSSLCFLGAIAV). At 141–163 (DRYISIFYALRYHSVVTLPRAWR) the chain is on the cytoplasmic side. Residues 164–183 (IIAAIWVASILTSLLFITYY) traverse the membrane as a helical segment. At 184–191 (NHTVVLLC) the chain is on the extracellular side. Residues 192–211 (LVGFFIAMLALMAVLYVHML) traverse the membrane as a helical segment. Over 212–240 (ARACQHARGIARLQKRQRPIHQGFGLKGA) the chain is Cytoplasmic. Residues 241-266 (ATLTILLGVFFLCWGPFFLHLSLIVL) traverse the membrane as a helical segment. Over 267–279 (CPQHPTCGCIFKN) the chain is Extracellular. The chain crosses the membrane as a helical span at residues 280 to 300 (FNLFLALIICNAIVDPLIYAF). Residues 301 to 317 (RSQELRKTLQEVLQCSW) lie on the Cytoplasmic side of the membrane. The S-palmitoyl cysteine moiety is linked to residue Cys-315.

It belongs to the G-protein coupled receptor 1 family. In terms of assembly, interacts with MGRN1, but does not undergo MGRN1-mediated ubiquitination; this interaction competes with GNAS-binding and thus inhibits agonist-induced cAMP production. Interacts with OPN3; the interaction results in a decrease in MC1R-mediated cAMP signaling and ultimately a decrease in melanin production in melanocytes.

It localises to the cell membrane. Functionally, receptor for MSH (alpha, beta and gamma) and ACTH. The activity of this receptor is mediated by G proteins which activate adenylate cyclase. Mediates melanogenesis, the production of eumelanin (black/brown) and phaeomelanin (red/yellow), via regulation of cAMP signaling in melanocytes. The sequence is that of Melanocyte-stimulating hormone receptor (MC1R) from Capreolus capreolus (European roe deer).